The primary structure comprises 411 residues: Keratin, type I cytoskeletal 12 (411 aa).

A head region spans residues 1–42 (DHDYEFPGIQAFAGLGMGFGGSPGGGSLYLPSGNDGGLLSGS). Residues 43–78 (EKETMQNLNDRLASYLDKVRALEDANAELENKIREW) are coil 1A. Residues 43-359 (EKETMQNLND…RLLDGEAQGD (317 aa)) form the IF rod domain. The interval 83-101 (GHGHGDCGPQHDYSKYHPL) is linker 1. A coil 1B region spans residues 102 to 193 (IEDLRNKIIS…KNHEEELQSC (92 aa)). Residues 194-216 (RAGGPGEVSVEMDAAPGVDLTRL) form a linker 12 region. A coil 2 region spans residues 217–354 (LNDMRAQYEA…IETYRRLLDG (138 aa)). Residues 355–411 (EAQGDGLDESSAMTGSRSQAQSIDSSKDPSKTRKIKTIVQEVVNGEVVSSQVQEIQN) are tail. Residues 356 to 387 (AQGDGLDESSAMTGSRSQAQSIDSSKDPSKTR) form a disordered region. The span at 365 to 378 (SAMTGSRSQAQSID) shows a compositional bias: polar residues.

Belongs to the intermediate filament family. In terms of assembly, heterotetramer of two type I and two type II keratins. Keratin-3 associates with keratin-12. In terms of tissue distribution, cornea specific. Associated mainly with all layers of the central corneal epithelium and also found in the suprabasal limbal epithelium.

Functionally, involved in corneal epithelium organization, integrity and corneal keratin expression. The sequence is that of Keratin, type I cytoskeletal 12 (KRT12) from Oryctolagus cuniculus (Rabbit).